The primary structure comprises 248 residues: Triosephosphate isomerase (248 aa).

Position 9–11 (9–11 (NWK)) interacts with substrate. His-94 functions as the Electrophile in the catalytic mechanism. Glu-166 functions as the Proton acceptor in the catalytic mechanism. Residues Gly-172, Ser-212, and 233-234 (GG) each bind substrate.

The protein belongs to the triosephosphate isomerase family. As to quaternary structure, homodimer.

It is found in the cytoplasm. It carries out the reaction D-glyceraldehyde 3-phosphate = dihydroxyacetone phosphate. The protein operates within carbohydrate biosynthesis; gluconeogenesis. Its pathway is carbohydrate degradation; glycolysis; D-glyceraldehyde 3-phosphate from glycerone phosphate: step 1/1. Its function is as follows. Involved in the gluconeogenesis. Catalyzes stereospecifically the conversion of dihydroxyacetone phosphate (DHAP) to D-glyceraldehyde-3-phosphate (G3P). In Caldanaerobacter subterraneus subsp. tengcongensis (strain DSM 15242 / JCM 11007 / NBRC 100824 / MB4) (Thermoanaerobacter tengcongensis), this protein is Triosephosphate isomerase.